A 154-amino-acid polypeptide reads, in one-letter code: MGLSDGEWQLVLNVWGKVEADIPSHGQEVLIRLFKGHPETLEKFDKFKHLKSEDEMKASEDLKKHGATVLTALGGILKKKGHHEAEIKPLAQSHATKHKIPVKYLEFISECIIQVLQSKHPGDFGADAQGAMNKALELFRKDMASNYKELGFQG.

The Globin domain occupies 2–148; the sequence is GLSDGEWQLV…FRKDMASNYK (147 aa). Ser4 carries the phosphoserine modification. Residue His65 coordinates nitrite. Residue His65 coordinates O2. Thr68 carries the post-translational modification Phosphothreonine. Heme b is bound at residue His94.

This sequence belongs to the globin family. As to quaternary structure, monomeric.

Its subcellular location is the cytoplasm. It is found in the sarcoplasm. It carries out the reaction Fe(III)-heme b-[protein] + nitric oxide + H2O = Fe(II)-heme b-[protein] + nitrite + 2 H(+). The catalysed reaction is H2O2 + AH2 = A + 2 H2O. Monomeric heme protein which primary function is to store oxygen and facilitate its diffusion within muscle tissues. Reversibly binds oxygen through a pentacoordinated heme iron and enables its timely and efficient release as needed during periods of heightened demand. Depending on the oxidative conditions of tissues and cells, and in addition to its ability to bind oxygen, it also has a nitrite reductase activity whereby it regulates the production of bioactive nitric oxide. Under stress conditions, like hypoxia and anoxia, it also protects cells against reactive oxygen species thanks to its pseudoperoxidase activity. In Hylobates agilis (Agile gibbon), this protein is Myoglobin (MB).